A 499-amino-acid polypeptide reads, in one-letter code: Cysteine--tRNA ligase (499 aa).

Residue Cys-31 participates in Zn(2+) binding. Positions 33–43 (VTVYDLCHLGH) match the 'HIGH' region motif. Zn(2+) is bound by residues Cys-215, His-240, and Glu-244. The 'KMSKS' region signature appears at 272 to 276 (KMSKS). Residue Lys-275 participates in ATP binding.

This sequence belongs to the class-I aminoacyl-tRNA synthetase family. Monomer. Requires Zn(2+) as cofactor.

The protein resides in the cytoplasm. The catalysed reaction is tRNA(Cys) + L-cysteine + ATP = L-cysteinyl-tRNA(Cys) + AMP + diphosphate. In Synechococcus sp. (strain WH7803), this protein is Cysteine--tRNA ligase.